The following is a 428-amino-acid chain: C4-dicarboxylate transport protein (428 aa).

8 helical membrane-spanning segments follow: residues 8–28 (VLYV…HLYP), 44–64 (LIKM…IAGM), 78–98 (LLYF…ATHI), 148–168 (GEIL…AHLG), 184–204 (VLFG…FGAM), 222–242 (LIGT…GAIA), 307–327 (IYMT…LTWM), and 355–375 (AATL…ILGI).

The protein belongs to the dicarboxylate/amino acid:cation symporter (DAACS) (TC 2.A.23) family.

Its subcellular location is the cell inner membrane. Responsible for the transport of dicarboxylates such as succinate, fumarate, and malate from the periplasm across the membrane. The sequence is that of C4-dicarboxylate transport protein from Burkholderia thailandensis (strain ATCC 700388 / DSM 13276 / CCUG 48851 / CIP 106301 / E264).